Consider the following 662-residue polypeptide: Methyl-accepting chemotaxis protein TlpA (662 aa).

Residues 1-16 (MKKTLTTIRRSSIARR) are Cytoplasmic-facing. The helical transmembrane segment at 17 to 37 (LIISFLLILIVPITALSVSAY) threads the bilayer. Topologically, residues 38–281 (QSAVASLDVQ…IHDAASRVLI (244 aa)) are extracellular. Residues 152 to 228 (VTEPYESISS…KAGTELKGDW (77 aa)) enclose the Cache domain. Residues 282–302 (MASIVLAIAIGAGMTAIYFVI) traverse the membrane as a helical segment. In terms of domain architecture, HAMP spans 303 to 355 (RSITKPLRRIVASAEKISEGDLTETIEINSKDELGVLSESFNHMAHSLRSLIH). Over 303 to 662 (RSITKPLRRI…DLTKQFKVDK (360 aa)) the chain is Cytoplasmic. Glu-370, Glu-594, Glu-629, and Glu-636 each carry glutamate methyl ester (Glu). The Methyl-accepting transducer domain maps to 374-610 (SADQTSRATE…EISAASNDIT (237 aa)).

Belongs to the methyl-accepting chemotaxis (MCP) protein family. As to quaternary structure, interacts with YabA.

The protein resides in the cell membrane. Its function is as follows. Chemotactic-signal transducers respond to changes in the concentration of attractants and repellents in the environment, transduce a signal from the outside to the inside of the cell, and facilitate sensory adaptation through the variation of the level of methylation. All amino acids serve as attractants in B.subtilis, they appear to cause an increase in the turnover methyl groups, leading to methylation of an unidentified acceptor, while repellents have been shown to cause a decrease in methyl group turnover. The methyl groups are added by a methyltransferase and removed by a methylesterase. The protein is Methyl-accepting chemotaxis protein TlpA of Bacillus subtilis (strain 168).